The sequence spans 812 residues: 5-methyltetrahydropteroyltriglutamate--homocysteine methyltransferase 3, chloroplastic (812 aa).

Residues Met1–Pro33 constitute a chloroplast transit peptide. Residues Ala13–Pro33 form a disordered region. Over residues Arg17–Ser27 the composition is skewed to pro residues. 2 residues coordinate 5-methyltetrahydropteroyltri-L-glutamate: Lys66 and Asn164. The tract at residues Met430–Ser456 is disordered. L-homocysteine-binding positions include Ile485–Ser487 and Glu538. Residues Ile485 to Ser487 and Glu538 contribute to the L-methionine site. 5-methyltetrahydropteroyltri-L-glutamate contacts are provided by residues Asp543, Tyr566, Arg569–Cys570, and Trp615. Asp653 is a binding site for L-homocysteine. Residue Asp653 coordinates L-methionine. Residues His695, Cys697, His706, Asp710, and Glu719 each contribute to the Zn(2+) site. The Proton donor role is filled by His749. Cys781 is a Zn(2+) binding site.

It belongs to the vitamin-B12 independent methionine synthase family. Requires Zn(2+) as cofactor. In terms of tissue distribution, expressed in seeds.

The protein resides in the plastid. It localises to the chloroplast. The enzyme catalyses 5-methyltetrahydropteroyltri-L-glutamate + L-homocysteine = tetrahydropteroyltri-L-glutamate + L-methionine. It participates in amino-acid biosynthesis; L-methionine biosynthesis via de novo pathway; L-methionine from L-homocysteine (MetE route): step 1/1. Its function is as follows. Catalyzes the transfer of a methyl group from 5-methyltetrahydrofolate to homocysteine resulting in methionine formation. This chain is 5-methyltetrahydropteroyltriglutamate--homocysteine methyltransferase 3, chloroplastic (MS3), found in Arabidopsis thaliana (Mouse-ear cress).